Reading from the N-terminus, the 5207-residue chain is NBPF family member NBPF20 (5207 aa).

64 Olduvai domains span residues 5-77 (SREL…PSCP), 80-135 (SREL…LDVD), 136-228 (RTKK…RSKK), 229-321 (ERRR…PSCP), 324-379 (SREL…LDVD), 380-472 (RTKK…RSKK), 473-565 (ERRR…PSCP), 568-623 (SREL…LDVD), 624-716 (RTKK…RSKK), 717-809 (ERRR…PSCP), 812-867 (SREL…LDVD), 868-960 (RTKK…RSKK), 961-1053 (ERRR…PSCP), 1056-1111 (SREL…LDVD), 1112-1204 (RTKK…RSKK), 1205-1297 (ERRR…PSCP), 1300-1355 (SREL…LDVD), 1356-1448 (RTKK…RSKK), 1449-1541 (ERRR…PSCP), 1544-1599 (SREL…LDVD), 1600-1692 (RTKK…RSKK), 1693-1785 (ERRR…PSCP), 1788-1843 (SREL…LDVD), 1844-1936 (RTKK…RSKK), 1937-2029 (ERRR…PSCP), 2032-2087 (SREL…LDVD), 2088-2180 (RTKK…RSKK), 2181-2273 (ERRR…PSCP), 2276-2331 (SREL…LDVD), 2332-2424 (RTKK…RSKK), 2425-2517 (ERRR…PSCP), 2520-2575 (SREL…LDVD), 2576-2668 (RTKK…RSKK), 2669-2761 (ERRR…PSCP), 2764-2819 (SREL…LDVD), 2820-2912 (RTKK…RSKK), 2913-3005 (ERRR…PSCP), 3008-3063 (SREL…LDVD), 3064-3156 (RTKK…RSKK), 3157-3249 (ERRR…PSCP), 3252-3307 (SREL…LDVD), 3308-3400 (RTKK…RSKK), 3401-3493 (ERRR…PSCP), 3496-3551 (SREL…LDVD), 3552-3644 (RTKK…RSKK), 3645-3737 (ERRR…PSCP), 3740-3795 (SREL…LDVD), 3796-3888 (RTKK…RSKK), 3889-3981 (ERRR…PSCP), 3984-4039 (SREL…LDVD), 4040-4132 (RTKK…RSKK), 4133-4225 (ERRR…PSCP), 4228-4283 (SREL…LDVD), 4284-4376 (RTKK…RSKK), 4377-4452 (ERRR…LDVD), 4453-4545 (RTKK…RSKK), 4546-4621 (ERRR…LDVD), 4622-4713 (RTKK…PSCP), 4716-4771 (SREL…LDVD), 4772-4864 (RTKK…RSKK), 4865-4957 (ERRR…PSCP), 4960-5015 (SREL…LDVD), 5016-5108 (RTKK…RSKK), and 5109-5207 (KRRR…IFPQ). Disordered stretches follow at residues 137-157 (TKKDQEEEEDQGPPCPRLSRE) and 215-256 (KGKG…LDEK). Over residues 216–234 (GKGKKRRGRRSKKERRRGR) the composition is skewed to basic residues. Disordered regions lie at residues 381-403 (TKKDQEEEEDQGPPCPRLSRELL) and 459-513 (KGKG…DRSY). A compositionally biased stretch (basic residues) spans 460–478 (GKGKKRRGRRSKKERRRGR). Residues 492 to 502 (LSRELLDEKGP) show a composition bias toward basic and acidic residues. Disordered regions lie at residues 625 to 647 (TKKDQEEEEDQGPPCPRLSRELL) and 703 to 744 (KGKG…LDEK). A compositionally biased stretch (basic residues) spans 704-722 (GKGKKRRGRRSKKERRRGR). Disordered stretches follow at residues 869 to 891 (TKKDQEEEEDQGPPCPRLSRELL) and 947 to 1001 (KGKG…DRSY). The segment covering 948–966 (GKGKKRRGRRSKKERRRGR) has biased composition (basic residues). Residues 980–990 (LSRELLDEKGP) are compositionally biased toward basic and acidic residues. Disordered regions lie at residues 1113–1135 (TKKDQEEEEDQGPPCPRLSRELL) and 1191–1245 (KGKG…DRSY). Residues 1192 to 1210 (GKGKKRRGRRSKKERRRGR) show a composition bias toward basic residues. The span at 1224 to 1234 (LSRELLDEKGP) shows a compositional bias: basic and acidic residues. Disordered regions lie at residues 1357-1379 (TKKDQEEEEDQGPPCPRLSRELL) and 1435-1489 (KGKG…DRSY). Basic residues predominate over residues 1436-1454 (GKGKKRRGRRSKKERRRGR). A compositionally biased stretch (basic and acidic residues) spans 1468–1478 (LSRELLDEKGP). 2 disordered regions span residues 1601 to 1623 (TKKDQEEEEDQGPPCPRLSRELL) and 1679 to 1733 (KGKG…DRSY). Positions 1680–1698 (GKGKKRRGRRSKKERRRGR) are enriched in basic residues. Residues 1712–1722 (LSRELLDEKGP) show a composition bias toward basic and acidic residues. Disordered stretches follow at residues 1845–1867 (TKKDQEEEEDQGPPCPRLSRELL) and 1923–1964 (KGKG…LDEK). Positions 1924–1942 (GKGKKRRGRRSKKERRRGR) are enriched in basic residues. Disordered regions lie at residues 2089–2111 (TKKDQEEEEDQGPPCPRLSRELL) and 2167–2208 (KGKG…LDEK). Residues 2168–2186 (GKGKKRRGRRSKKERRRGR) show a composition bias toward basic residues. 2 disordered regions span residues 2333–2355 (TKKDQEEEEDQGPPCPRLSRELL) and 2411–2452 (KGKG…LDEK). The span at 2412–2430 (GKGKKRRGRRSKKERRRGR) shows a compositional bias: basic residues. 2 disordered regions span residues 2577–2599 (TKKDQEEEEDQGPPCPRLSRELL) and 2655–2709 (KGKG…DRSY). The segment covering 2656–2674 (GKGKKRRGRRSKKERRRGR) has biased composition (basic residues). The segment covering 2688-2698 (LSRELLDEKGP) has biased composition (basic and acidic residues). 2 disordered regions span residues 2821 to 2843 (TKKDQEEEEDQGPPCPRLSRELL) and 2899 to 2953 (KGKG…DRSY). A compositionally biased stretch (basic residues) spans 2900 to 2918 (GKGKKRRGRRSKKERRRGR). The span at 2932–2942 (LSRELLDEKGP) shows a compositional bias: basic and acidic residues. 2 disordered regions span residues 3065 to 3087 (TKKDQEEEEDQGPPCPRLSRELL) and 3143 to 3197 (KGKG…DRSY). Residues 3144–3162 (GKGKKRRGRRSKKERRRGR) show a composition bias toward basic residues. A compositionally biased stretch (basic and acidic residues) spans 3176 to 3186 (LSRELLDEKGP). 2 disordered regions span residues 3309–3331 (TKKDQEEEEDQGPPCPRLSRELL) and 3387–3441 (KGKG…DRSY). Basic residues predominate over residues 3388–3406 (GKGKKRRGRRSKKERRRGR). A compositionally biased stretch (basic and acidic residues) spans 3420 to 3430 (LSRELLDEKGP). 2 disordered regions span residues 3553-3575 (TKKDQEEEEDQGPPCPRLSRELL) and 3631-3672 (KGKG…LDEK). A compositionally biased stretch (basic residues) spans 3632-3650 (GKGKKRRGRRSKKERRRGR). Disordered regions lie at residues 3797-3819 (TKKDQEEEEDQGPPCPRLSRELL) and 3875-3916 (KGKG…LDEK). A compositionally biased stretch (basic residues) spans 3876-3894 (GKGKKRRGRRSKKERRRGR). Disordered regions lie at residues 4041-4063 (TKKDQEEEEDQGPPCPRLSRELL) and 4119-4160 (KGKG…LDEK). The span at 4120-4138 (GKGKKRRGRRSKKERRRGR) shows a compositional bias: basic residues. Disordered stretches follow at residues 4285–4307 (TKKDQEEEEDQGPPCPRLSRELL), 4361–4404 (EKKG…LDEK), 4453–4474 (RTKKDQEEEEDQGPPCPRLSRE), and 4530–4573 (EKKG…LDEK). Residues 4364–4382 (GKGKKRRGRRSKKERRRGR) are compositionally biased toward basic residues. The segment covering 4533–4551 (GKGKKRRGRRSKKERRRGR) has biased composition (basic residues). Disordered stretches follow at residues 4773 to 4793 (TKKDQEEEEDQGPPCPRLSRE) and 4851 to 4889 (KGKGKKRRGRRSKKERRRGRKEGEEDQNPPCPRLSRELL). The span at 4852–4870 (GKGKKRRGRRSKKERRRGR) shows a compositional bias: basic residues. Disordered regions lie at residues 5017 to 5037 (TKKDQEEEEDQGPPCPRLSRE) and 5094 to 5128 (KKGKGKKRRGRRSKKKRRRGRKEGEEDQNPPCPRL). The segment covering 5096-5114 (GKGKKRRGRRSKKKRRRGR) has biased composition (basic residues).

Belongs to the NBPF family.

It localises to the cytoplasm. The chain is NBPF family member NBPF20 from Homo sapiens (Human).